The sequence spans 617 residues: Serine/threonine-protein phosphatase 2A activator 1 (617 aa).

The span at methionine 1 to alanine 11 shows a compositional bias: pro residues. 5 disordered regions span residues methionine 1–glutamate 25, valine 84–serine 169, glycine 230–glutamine 261, serine 376–threonine 398, and arginine 572–lysine 617. Polar residues predominate over residues valine 84 to glycine 93. Positions glutamine 94–glutamine 104 are enriched in low complexity. The span at glutamate 239–glycine 252 shows a compositional bias: acidic residues.

Belongs to the PTPA-type PPIase family.

Its subcellular location is the cytoplasm. It is found in the nucleus. It catalyses the reaction [protein]-peptidylproline (omega=180) = [protein]-peptidylproline (omega=0). In terms of biological role, PPIases accelerate the folding of proteins. It catalyzes the cis-trans isomerization of proline imidic peptide bonds in oligopeptides. Acts as a regulatory subunit for PP2A-like phosphatases modulating their activity or substrate specificity, probably by inducing a conformational change in the catalytic subunit, a direct target of the PPIase. Can reactivate inactive phosphatase PP2A-phosphatase methylesterase complexes (PP2Ai) in presence of ATP and Mg(2+) by dissociating the inactive form from the complex. The sequence is that of Serine/threonine-protein phosphatase 2A activator 1 (rrd-1) from Neurospora crassa (strain ATCC 24698 / 74-OR23-1A / CBS 708.71 / DSM 1257 / FGSC 987).